Consider the following 187-residue polypeptide: Isopentenyl-diphosphate Delta-isomerase (187 aa).

Mn(2+) contacts are provided by H36, H43, and H80. The Nudix hydrolase domain maps to 41-178; it reads VRHRAFTALL…RQLRLCPWFE (138 aa). E98 serves as a coordination point for Mg(2+). Mn(2+) contacts are provided by E127 and E129. E129 is a catalytic residue.

It belongs to the IPP isomerase type 1 family. Requires Mg(2+) as cofactor. Mn(2+) is required as a cofactor.

The protein localises to the cytoplasm. The enzyme catalyses isopentenyl diphosphate = dimethylallyl diphosphate. The protein operates within isoprenoid biosynthesis; dimethylallyl diphosphate biosynthesis; dimethylallyl diphosphate from isopentenyl diphosphate: step 1/1. Functionally, catalyzes the 1,3-allylic rearrangement of the homoallylic substrate isopentenyl (IPP) to its highly electrophilic allylic isomer, dimethylallyl diphosphate (DMAPP). This is Isopentenyl-diphosphate Delta-isomerase from Haloarcula marismortui (strain ATCC 43049 / DSM 3752 / JCM 8966 / VKM B-1809) (Halobacterium marismortui).